The following is a 428-amino-acid chain: Histidine--tRNA ligase (428 aa).

It belongs to the class-II aminoacyl-tRNA synthetase family. In terms of assembly, homodimer.

Its subcellular location is the cytoplasm. The catalysed reaction is tRNA(His) + L-histidine + ATP = L-histidyl-tRNA(His) + AMP + diphosphate + H(+). This chain is Histidine--tRNA ligase, found in Bordetella bronchiseptica (strain ATCC BAA-588 / NCTC 13252 / RB50) (Alcaligenes bronchisepticus).